The following is a 372-amino-acid chain: Aminomethyltransferase (372 aa).

This sequence belongs to the GcvT family. In terms of assembly, the glycine cleavage system is composed of four proteins: P, T, L and H.

The enzyme catalyses N(6)-[(R)-S(8)-aminomethyldihydrolipoyl]-L-lysyl-[protein] + (6S)-5,6,7,8-tetrahydrofolate = N(6)-[(R)-dihydrolipoyl]-L-lysyl-[protein] + (6R)-5,10-methylene-5,6,7,8-tetrahydrofolate + NH4(+). Functionally, the glycine cleavage system catalyzes the degradation of glycine. The sequence is that of Aminomethyltransferase from Burkholderia orbicola (strain MC0-3).